The primary structure comprises 391 residues: S-adenosylmethionine synthase (391 aa).

Residue His-14 participates in ATP binding. Residue Asp-16 coordinates Mg(2+). Glu-42 is a K(+) binding site. L-methionine contacts are provided by Glu-55 and Gln-98. The flexible loop stretch occupies residues Gln-98–Glu-108. ATP contacts are provided by residues Asp-172–Lys-174, Arg-238–Phe-239, Asp-247, Arg-253–Lys-254, Ala-270, and Lys-274. L-methionine is bound at residue Asp-247. An L-methionine-binding site is contributed by Lys-278.

This sequence belongs to the AdoMet synthase family. In terms of assembly, homotetramer; dimer of dimers. Requires Mg(2+) as cofactor. K(+) is required as a cofactor.

It localises to the cytoplasm. It catalyses the reaction L-methionine + ATP + H2O = S-adenosyl-L-methionine + phosphate + diphosphate. The protein operates within amino-acid biosynthesis; S-adenosyl-L-methionine biosynthesis; S-adenosyl-L-methionine from L-methionine: step 1/1. Functionally, catalyzes the formation of S-adenosylmethionine (AdoMet) from methionine and ATP. The overall synthetic reaction is composed of two sequential steps, AdoMet formation and the subsequent tripolyphosphate hydrolysis which occurs prior to release of AdoMet from the enzyme. The protein is S-adenosylmethionine synthase of Clostridium tetani (strain Massachusetts / E88).